A 121-amino-acid chain; its full sequence is Trypsin/alpha-amylase inhibitor CMX1/CMX3 (121 aa).

The signal sequence occupies residues 1–24 (MAFKHQLILSTAILLAVLAAASAS).

The protein belongs to the protease inhibitor I6 (cereal trypsin/alpha-amylase inhibitor) family.

It is found in the secreted. The polypeptide is Trypsin/alpha-amylase inhibitor CMX1/CMX3 (Triticum aestivum (Wheat)).